The following is a 234-amino-acid chain: Phosphoribosylformylglycinamidine synthase subunit PurQ (234 aa).

The Glutamine amidotransferase type-1 domain occupies 4–234; the sequence is RIGVVTFPGS…TSILKKLVNA (231 aa). Cys-87 acts as the Nucleophile in catalysis. Active-site residues include His-204 and Glu-206.

As to quaternary structure, part of the FGAM synthase complex composed of 1 PurL, 1 PurQ and 2 PurS subunits.

The protein localises to the cytoplasm. It catalyses the reaction N(2)-formyl-N(1)-(5-phospho-beta-D-ribosyl)glycinamide + L-glutamine + ATP + H2O = 2-formamido-N(1)-(5-O-phospho-beta-D-ribosyl)acetamidine + L-glutamate + ADP + phosphate + H(+). The catalysed reaction is L-glutamine + H2O = L-glutamate + NH4(+). Its pathway is purine metabolism; IMP biosynthesis via de novo pathway; 5-amino-1-(5-phospho-D-ribosyl)imidazole from N(2)-formyl-N(1)-(5-phospho-D-ribosyl)glycinamide: step 1/2. Its function is as follows. Part of the phosphoribosylformylglycinamidine synthase complex involved in the purines biosynthetic pathway. Catalyzes the ATP-dependent conversion of formylglycinamide ribonucleotide (FGAR) and glutamine to yield formylglycinamidine ribonucleotide (FGAM) and glutamate. The FGAM synthase complex is composed of three subunits. PurQ produces an ammonia molecule by converting glutamine to glutamate. PurL transfers the ammonia molecule to FGAR to form FGAM in an ATP-dependent manner. PurS interacts with PurQ and PurL and is thought to assist in the transfer of the ammonia molecule from PurQ to PurL. The polypeptide is Phosphoribosylformylglycinamidine synthase subunit PurQ (Streptomyces avermitilis (strain ATCC 31267 / DSM 46492 / JCM 5070 / NBRC 14893 / NCIMB 12804 / NRRL 8165 / MA-4680)).